Here is a 1561-residue protein sequence, read N- to C-terminus: Formin-E (1561 aa).

Over residues 1-28 the composition is skewed to low complexity; that stretch reads MDNHSSSSNPSSLSSSSSSSSSSSSFLS. Disordered stretches follow at residues 1-63, 77-187, 211-279, and 305-365; these read MDNH…EEKP, EEEE…GKLS, PIIV…SSED, and ILRS…NLNY. Over residues 29-51 the composition is skewed to basic and acidic residues; sequence DHVKKEEQNGLDTIKEEIENKIE. Residues 32 to 85 are a coiled coil; the sequence is KKEEQNGLDTIKEEIENKIENEEEEEKIEEKPIEKVEEEKIIVQKEEEEKIEEE. The span at 80–89 shows a compositional bias: acidic residues; that stretch reads EKIEEEPIEK. A compositionally biased stretch (polar residues) spans 103-120; sequence DNINTTVEAKTLETSTEP. Residues 158–208 are a coiled coil; sequence EQQEQQEKQKEETKPSIREEVKEKIKGKLSEIKEEIKDIKEEIKHVIREEV. Basic and acidic residues predominate over residues 162–187; sequence QQEKQKEETKPSIREEVKEKIKGKLS. A compositionally biased stretch (pro residues) spans 220–229; that stretch reads SPPPPPPPPS. The segment covering 230-258 has biased composition (low complexity); it reads ITVQSSSPVSSQISSPVSSPVSSPKPSVT. Polar residues predominate over residues 305–320; the sequence is ILRSKSSPNPGANNPN. Positions 326-365 are enriched in low complexity; it reads NNSSSSSSSNNNSDNNNNSDNNSNNNNINNNNSSSNNLNY. A Phorbol-ester/DAG-type zinc finger spans residues 379–427; sequence YHDFKIHRGTSSCVYCGENTRLWSTSYKCFFCGVVCHKKCLDSMNTIPC. Residues 465–534 are compositionally biased toward low complexity; it reads PSSITNSSSK…TSISSPPIAS (70 aa). The interval 465–549 is disordered; that stretch reads PSSITNSSSK…PLLQQQQQQQ (85 aa). The stretch at 541–573 forms a coiled coil; that stretch reads LLQQQQQQQQQQQQQQQQQQQQQQQQQQISTTQ. One can recognise a GBD/FH3 domain in the interval 581–929; that stretch reads SEKPDDDMIN…QISLHKGGFE (349 aa). Residues 952–989 are a coiled coil; that stretch reads LNRKLGELEKQNIDKAMKIQEQDINIKSLLDLLKQLKD. Disordered regions lie at residues 1009-1092, 1466-1508, and 1526-1561; these read MEPP…VPKP, EEKR…SDED, and RQAK…PNKN. The segment covering 1017-1033 has biased composition (low complexity); the sequence is SVKSPDDPNNAAPIVVA. The FH1 domain occupies 1019–1081; that stretch reads KSPDDPNNAA…LGAKKPPAGV (63 aa). Residues 1034–1070 are compositionally biased toward pro residues; that stretch reads PIPPPPPPISGAPPPPPPPPPPMKGGAGPPPPPPPPG. Residues 1071–1081 are compositionally biased toward low complexity; it reads KLGAKKPPAGV. An FH2 domain is found at 1086–1475; the sequence is PPKVPKPSHP…EEKRLQQKQQ (390 aa). Residues 1398 to 1491 adopt a coiled-coil conformation; it reads LATASTEVEK…RKLTTSNESA (94 aa). Over residues 1466–1481 the composition is skewed to basic and acidic residues; the sequence is EEKRLQQKQQRQERAV. 2 stretches are compositionally biased toward polar residues: residues 1484–1498 and 1536–1561; these read LTTS…PNHA and HQIA…PNKN. The DAD domain maps to 1488–1518; sequence NESASASPNHAKSTDDKSDEDDDIVNDLLMA.

Belongs to the formin homology family. Diaphanous subfamily. Interacts (via GBD/FH3 domain) with activated Rho-GTPases.

Formins play an important role in the nucleation of actin and the formation of linear actin filaments. This chain is Formin-E (forE), found in Dictyostelium discoideum (Social amoeba).